The following is a 486-amino-acid chain: Protein nucleotidyltransferase YdiU (486 aa).

The ATP site is built by G90, G92, R93, K113, D125, G126, R176, and R183. D252 functions as the Proton acceptor in the catalytic mechanism. Residues N253 and D262 each coordinate Mg(2+). D262 is an ATP binding site.

This sequence belongs to the SELO family. Mg(2+) is required as a cofactor. It depends on Mn(2+) as a cofactor.

The catalysed reaction is L-seryl-[protein] + ATP = 3-O-(5'-adenylyl)-L-seryl-[protein] + diphosphate. It carries out the reaction L-threonyl-[protein] + ATP = 3-O-(5'-adenylyl)-L-threonyl-[protein] + diphosphate. The enzyme catalyses L-tyrosyl-[protein] + ATP = O-(5'-adenylyl)-L-tyrosyl-[protein] + diphosphate. It catalyses the reaction L-histidyl-[protein] + UTP = N(tele)-(5'-uridylyl)-L-histidyl-[protein] + diphosphate. The catalysed reaction is L-seryl-[protein] + UTP = O-(5'-uridylyl)-L-seryl-[protein] + diphosphate. It carries out the reaction L-tyrosyl-[protein] + UTP = O-(5'-uridylyl)-L-tyrosyl-[protein] + diphosphate. Functionally, nucleotidyltransferase involved in the post-translational modification of proteins. It can catalyze the addition of adenosine monophosphate (AMP) or uridine monophosphate (UMP) to a protein, resulting in modifications known as AMPylation and UMPylation. The protein is Protein nucleotidyltransferase YdiU of Pseudomonas putida (strain ATCC 47054 / DSM 6125 / CFBP 8728 / NCIMB 11950 / KT2440).